Here is a 512-residue protein sequence, read N- to C-terminus: NAD(P)H-quinone oxidoreductase subunit 2, organellar chromatophore (512 aa).

14 helical membrane passes run Leu6–Leu26, Trp43–Trp63, Leu80–Trp100, Gly107–Leu127, Leu133–Tyr153, Leu168–Leu188, Ala210–Phe230, Pro242–Leu262, Trp276–Leu296, Met304–Thr324, Ile332–Phe352, Ile376–Gly396, Leu411–Ile431, and Val464–Phe484.

This sequence belongs to the complex I subunit 2 family. In terms of assembly, NDH-1 can be composed of about 15 different subunits; different subcomplexes with different compositions have been identified which probably have different functions.

The protein resides in the plastid. Its subcellular location is the organellar chromatophore thylakoid membrane. The enzyme catalyses a plastoquinone + NADH + (n+1) H(+)(in) = a plastoquinol + NAD(+) + n H(+)(out). It catalyses the reaction a plastoquinone + NADPH + (n+1) H(+)(in) = a plastoquinol + NADP(+) + n H(+)(out). Functionally, NDH-1 shuttles electrons from an unknown electron donor, via FMN and iron-sulfur (Fe-S) centers, to quinones in the respiratory and/or the photosynthetic chain. The immediate electron acceptor for the enzyme in this species is believed to be plastoquinone. Couples the redox reaction to proton translocation, and thus conserves the redox energy in a proton gradient. Cyanobacterial NDH-1 also plays a role in inorganic carbon-concentration. This is NAD(P)H-quinone oxidoreductase subunit 2, organellar chromatophore from Paulinella chromatophora.